Here is a 109-residue protein sequence, read N- to C-terminus: Cell division protein ZapA (109 aa).

Positions 71–99 form a coiled coil; it reads KTRDYASNMEQRIRMLQQTIEQALLEQGR.

The protein belongs to the ZapA family. Type 1 subfamily. In terms of assembly, homodimer. Interacts with FtsZ.

Its subcellular location is the cytoplasm. In terms of biological role, activator of cell division through the inhibition of FtsZ GTPase activity, therefore promoting FtsZ assembly into bundles of protofilaments necessary for the formation of the division Z ring. It is recruited early at mid-cell but it is not essential for cell division. The polypeptide is Cell division protein ZapA (Serratia proteamaculans (strain 568)).